Here is a 311-residue protein sequence, read N- to C-terminus: GTP cyclohydrolase FolE2 (311 aa).

The protein belongs to the GTP cyclohydrolase IV family.

The catalysed reaction is GTP + H2O = 7,8-dihydroneopterin 3'-triphosphate + formate + H(+). Its pathway is cofactor biosynthesis; 7,8-dihydroneopterin triphosphate biosynthesis; 7,8-dihydroneopterin triphosphate from GTP: step 1/1. Converts GTP to 7,8-dihydroneopterin triphosphate. In Xanthomonas campestris pv. campestris (strain B100), this protein is GTP cyclohydrolase FolE2.